The sequence spans 684 residues: Protein real-time (684 aa).

Positions 2 to 178 constitute a PRELI/MSF1 domain; the sequence is VQKYESPVRI…FVNELKQEGI (177 aa). The CRAL-TRIO domain occupies 297–474; sequence TPAVVEKYFP…FLGGSCNVID (178 aa). Positions 537–684 constitute a GOLD domain; sequence HHGLYKAVDL…GFSSNSLQSR (148 aa).

It localises to the mitochondrion. This chain is Protein real-time, found in Anopheles gambiae (African malaria mosquito).